An 876-amino-acid polypeptide reads, in one-letter code: Alanine--tRNA ligase (876 aa).

Histidine 568, histidine 572, cysteine 670, and histidine 674 together coordinate Zn(2+).

Belongs to the class-II aminoacyl-tRNA synthetase family. The cofactor is Zn(2+).

The protein resides in the cytoplasm. The enzyme catalyses tRNA(Ala) + L-alanine + ATP = L-alanyl-tRNA(Ala) + AMP + diphosphate. Its function is as follows. Catalyzes the attachment of alanine to tRNA(Ala) in a two-step reaction: alanine is first activated by ATP to form Ala-AMP and then transferred to the acceptor end of tRNA(Ala). Also edits incorrectly charged Ser-tRNA(Ala) and Gly-tRNA(Ala) via its editing domain. This is Alanine--tRNA ligase from Anaplasma phagocytophilum (strain HZ).